The sequence spans 197 residues: Phosphoheptose isomerase (197 aa).

Positions 36 to 197 constitute an SIS domain; sequence MTASLMNNGK…IDCLLLGVEE (162 aa). 51–53 provides a ligand contact to substrate; that stretch reads NGG. Zn(2+)-binding residues include His-60 and Glu-64. Residues Glu-64, 93–94, 119–121, Ser-124, and Gln-174 each bind substrate; these read ND and STS. Residues Gln-174 and His-182 each contribute to the Zn(2+) site.

Belongs to the SIS family. GmhA subfamily. Homotetramer. Zn(2+) serves as cofactor.

The protein resides in the cytoplasm. It carries out the reaction 2 D-sedoheptulose 7-phosphate = D-glycero-alpha-D-manno-heptose 7-phosphate + D-glycero-beta-D-manno-heptose 7-phosphate. It functions in the pathway carbohydrate biosynthesis; D-glycero-D-manno-heptose 7-phosphate biosynthesis; D-glycero-alpha-D-manno-heptose 7-phosphate and D-glycero-beta-D-manno-heptose 7-phosphate from sedoheptulose 7-phosphate: step 1/1. Catalyzes the isomerization of sedoheptulose 7-phosphate in D-glycero-D-manno-heptose 7-phosphate. This is Phosphoheptose isomerase from Azoarcus sp. (strain BH72).